An 85-amino-acid polypeptide reads, in one-letter code: DNA-directed RNA polymerase subunit Rpo11 (85 aa).

The protein belongs to the archaeal Rpo11/eukaryotic RPB11/RPC19 RNA polymerase subunit family. In terms of assembly, part of the RNA polymerase complex.

It is found in the cytoplasm. It catalyses the reaction RNA(n) + a ribonucleoside 5'-triphosphate = RNA(n+1) + diphosphate. Its function is as follows. DNA-dependent RNA polymerase (RNAP) catalyzes the transcription of DNA into RNA using the four ribonucleoside triphosphates as substrates. The polypeptide is DNA-directed RNA polymerase subunit Rpo11 (Methanothermobacter thermautotrophicus (strain ATCC 29096 / DSM 1053 / JCM 10044 / NBRC 100330 / Delta H) (Methanobacterium thermoautotrophicum)).